The sequence spans 427 residues: Anhydro-N-acetylmuramic acid kinase (427 aa).

Position 32–39 (32–39) interacts with ATP; that stretch reads GTSLDGMD.

Belongs to the anhydro-N-acetylmuramic acid kinase family.

The enzyme catalyses 1,6-anhydro-N-acetyl-beta-muramate + ATP + H2O = N-acetyl-D-muramate 6-phosphate + ADP + H(+). It functions in the pathway amino-sugar metabolism; 1,6-anhydro-N-acetylmuramate degradation. Its pathway is cell wall biogenesis; peptidoglycan recycling. Its function is as follows. Catalyzes the specific phosphorylation of 1,6-anhydro-N-acetylmuramic acid (anhMurNAc) with the simultaneous cleavage of the 1,6-anhydro ring, generating MurNAc-6-P. Is required for the utilization of anhMurNAc either imported from the medium or derived from its own cell wall murein, and thus plays a role in cell wall recycling. This is Anhydro-N-acetylmuramic acid kinase from Psychrobacter cryohalolentis (strain ATCC BAA-1226 / DSM 17306 / VKM B-2378 / K5).